A 651-amino-acid polypeptide reads, in one-letter code: Acetyl-coenzyme A synthetase (651 aa).

Residues 191 to 194, T311, and N335 contribute to the CoA site; that span reads RGGK. Residues 387-389, 411-416, D500, and R515 contribute to the ATP site; these read GEP and DTWWQT. S523 contacts CoA. Position 526 (R526) interacts with ATP. Residues V537, H539, and V542 each contribute to the Mg(2+) site. Residue R584 participates in CoA binding. Position 609 is an N6-acetyllysine (K609).

It belongs to the ATP-dependent AMP-binding enzyme family. The cofactor is Mg(2+). In terms of processing, acetylated. Deacetylation by the SIR2-homolog deacetylase activates the enzyme.

The catalysed reaction is acetate + ATP + CoA = acetyl-CoA + AMP + diphosphate. Catalyzes the conversion of acetate into acetyl-CoA (AcCoA), an essential intermediate at the junction of anabolic and catabolic pathways. AcsA undergoes a two-step reaction. In the first half reaction, AcsA combines acetate with ATP to form acetyl-adenylate (AcAMP) intermediate. In the second half reaction, it can then transfer the acetyl group from AcAMP to the sulfhydryl group of CoA, forming the product AcCoA. The sequence is that of Acetyl-coenzyme A synthetase from Stutzerimonas stutzeri (strain A1501) (Pseudomonas stutzeri).